A 326-amino-acid polypeptide reads, in one-letter code: Biotin synthase (326 aa).

Residues 42-266 (NEIQLAALLN…LMPKSYVRLA (225 aa)) form the Radical SAM core domain. 3 residues coordinate [4Fe-4S] cluster: cysteine 57, cysteine 61, and cysteine 64. Cysteine 101, cysteine 132, cysteine 192, and arginine 264 together coordinate [2Fe-2S] cluster.

Belongs to the radical SAM superfamily. Biotin synthase family. As to quaternary structure, homodimer. The cofactor is [4Fe-4S] cluster. Requires [2Fe-2S] cluster as cofactor.

It catalyses the reaction (4R,5S)-dethiobiotin + (sulfur carrier)-SH + 2 reduced [2Fe-2S]-[ferredoxin] + 2 S-adenosyl-L-methionine = (sulfur carrier)-H + biotin + 2 5'-deoxyadenosine + 2 L-methionine + 2 oxidized [2Fe-2S]-[ferredoxin]. It functions in the pathway cofactor biosynthesis; biotin biosynthesis; biotin from 7,8-diaminononanoate: step 2/2. Catalyzes the conversion of dethiobiotin (DTB) to biotin by the insertion of a sulfur atom into dethiobiotin via a radical-based mechanism. The chain is Biotin synthase from Ehrlichia chaffeensis (strain ATCC CRL-10679 / Arkansas).